The primary structure comprises 273 residues: Dermonecrotic toxin LdSicTox-alphaIB3aii (273 aa).

Histidine 5 is a catalytic residue. The Mg(2+) site is built by glutamate 25 and aspartate 27. Histidine 41 serves as the catalytic Nucleophile. 2 disulfides stabilise this stretch: cysteine 45–cysteine 51 and cysteine 47–cysteine 190. Aspartate 85 provides a ligand contact to Mg(2+).

It belongs to the arthropod phospholipase D family. Class II subfamily. The cofactor is Mg(2+). As to expression, expressed by the venom gland.

The protein resides in the secreted. The catalysed reaction is an N-(acyl)-sphingosylphosphocholine = an N-(acyl)-sphingosyl-1,3-cyclic phosphate + choline. It catalyses the reaction an N-(acyl)-sphingosylphosphoethanolamine = an N-(acyl)-sphingosyl-1,3-cyclic phosphate + ethanolamine. It carries out the reaction a 1-acyl-sn-glycero-3-phosphocholine = a 1-acyl-sn-glycero-2,3-cyclic phosphate + choline. The enzyme catalyses a 1-acyl-sn-glycero-3-phosphoethanolamine = a 1-acyl-sn-glycero-2,3-cyclic phosphate + ethanolamine. Its function is as follows. Dermonecrotic toxins cleave the phosphodiester linkage between the phosphate and headgroup of certain phospholipids (sphingolipid and lysolipid substrates), forming an alcohol (often choline) and a cyclic phosphate. This toxin acts on sphingomyelin (SM). It may also act on ceramide phosphoethanolamine (CPE), lysophosphatidylcholine (LPC) and lysophosphatidylethanolamine (LPE), but not on lysophosphatidylserine (LPS), and lysophosphatidylglycerol (LPG). It acts by transphosphatidylation, releasing exclusively cyclic phosphate products as second products. Induces dermonecrosis, hemolysis, increased vascular permeability, edema, inflammatory response, and platelet aggregation. This chain is Dermonecrotic toxin LdSicTox-alphaIB3aii, found in Loxosceles deserta (Desert recluse spider).